Consider the following 256-residue polypeptide: Floral homeotic protein APETALA 1 (256 aa).

The MADS-box domain maps to 1–61 (MGRGRVQLKR…GKLFEYSTDP (61 aa)). Positions 88 to 178 (NTNWSMEYNR…SKQIKERENV (91 aa)) constitute a K-box domain. The disordered stretch occupies residues 187–206 (DEQNHGHNMPPPPPPQQHQI).

Homodimer capable of binding to CArG-box sequences.

The protein localises to the nucleus. In terms of biological role, transcription factor that promotes early floral meristem identity in synergy with LEAFY. Displays a redundant function with CAULIFLOWER in the up-regulation of LEAFY. Required subsequently for the transition of an inflorescence meristem into a floral meristem, and for the normal development of sepals and petals in flowers. Regulates positively B class homeotic proteins. In Brassica oleracea (Wild cabbage), this protein is Floral homeotic protein APETALA 1 (AP1).